The primary structure comprises 285 residues: uncharacterized protein (285 aa).

Mn(2+) contacts are provided by H110, D131, H133, D135, D214, and D216.

It belongs to the arginase family. Mn(2+) serves as cofactor.

This is an uncharacterized protein from Methanothermus fervidus.